Consider the following 583-residue polypeptide: 1-deoxy-D-xylulose-5-phosphate synthase (583 aa).

Thiamine diphosphate is bound by residues H74 and G115 to S117. D146 is a binding site for Mg(2+). Residues G147–G148, N175, F244, and E327 contribute to the thiamine diphosphate site. N175 provides a ligand contact to Mg(2+).

The protein belongs to the transketolase family. DXPS subfamily. In terms of assembly, homodimer. Mg(2+) serves as cofactor. It depends on thiamine diphosphate as a cofactor.

It catalyses the reaction D-glyceraldehyde 3-phosphate + pyruvate + H(+) = 1-deoxy-D-xylulose 5-phosphate + CO2. It functions in the pathway metabolic intermediate biosynthesis; 1-deoxy-D-xylulose 5-phosphate biosynthesis; 1-deoxy-D-xylulose 5-phosphate from D-glyceraldehyde 3-phosphate and pyruvate: step 1/1. Its function is as follows. Catalyzes the acyloin condensation reaction between C atoms 2 and 3 of pyruvate and glyceraldehyde 3-phosphate to yield 1-deoxy-D-xylulose-5-phosphate (DXP). In Myxococcus xanthus (strain DK1622), this protein is 1-deoxy-D-xylulose-5-phosphate synthase.